A 1227-amino-acid chain; its full sequence is Sterol 3-beta-glucosyltransferase (1227 aa).

Disordered stretches follow at residues 1–76 (MLKG…AASP) and 104–189 (QLAT…MTSK). Over residues 48–57 (KHKEAERRLT) the composition is skewed to basic and acidic residues. The span at 114–135 (AGADETEDEMDEAGDETGDDAD) shows a compositional bias: acidic residues. The segment covering 154-171 (ESRRSTLFELSIEPHPES) has biased composition (basic and acidic residues). The span at 179–189 (TKNRRSRMTSK) shows a compositional bias: basic residues. The GRAM 1 domain maps to 188-229 (SKLRSKFNLDDDEELVREYPCWLLRDVLIQGHIYLTSRNLLF). The region spanning 239–342 (SARLTGNLSI…WSSALKKQVF (104 aa)) is the PH domain. Residues 449–469 (DAAIASEAAADAAAADTASHS) are compositionally biased toward low complexity. Disordered stretches follow at residues 449–484 (DAAI…RSTE) and 523–550 (TLKL…LESR). One can recognise a GRAM 2 domain in the interval 602–668 (KRFKAHFSLT…HDVENCYKEQ (67 aa)). 13 residues coordinate UDP-alpha-D-glucose: serine 786, arginine 787, aspartate 789, asparagine 1060, asparagine 1088, valine 1089, histidine 1091, histidine 1104, serine 1107, glycine 1108, threonine 1109, aspartate 1128, and glutamine 1129.

The protein belongs to the glycosyltransferase 28 family.

It is found in the cytoplasm. Its subcellular location is the membrane. The catalysed reaction is a sterol + UDP-alpha-D-glucose = a sterol 3-beta-D-glucoside + UDP + H(+). It catalyses the reaction ergosterol + UDP-alpha-D-glucose = ergosteryl 3-beta-D-glucoside + UDP + H(+). Its function is as follows. Sterol glycosyltransferase responsible for the glycosylation of ergosterol to form ergosterol-glucoside. This Eremothecium gossypii (strain ATCC 10895 / CBS 109.51 / FGSC 9923 / NRRL Y-1056) (Yeast) protein is Sterol 3-beta-glucosyltransferase.